The chain runs to 449 residues: Phosphoribosylamine--glycine ligase (449 aa).

Positions 112–325 constitute an ATP-grasp domain; that stretch reads RELMEKYDIP…IVTLHASIAE (214 aa). 139–202 is an ATP binding site; that stretch reads IDELGKPVAV…EEKCVGEEYT (64 aa). Positions 283, 295, and 297 each coordinate Mg(2+). Mn(2+) is bound by residues Gln-283, Glu-295, and Asn-297.

It belongs to the GARS family. It depends on Mg(2+) as a cofactor. Mn(2+) serves as cofactor.

The catalysed reaction is 5-phospho-beta-D-ribosylamine + glycine + ATP = N(1)-(5-phospho-beta-D-ribosyl)glycinamide + ADP + phosphate + H(+). Its pathway is purine metabolism; IMP biosynthesis via de novo pathway; N(1)-(5-phospho-D-ribosyl)glycinamide from 5-phospho-alpha-D-ribose 1-diphosphate: step 2/2. The polypeptide is Phosphoribosylamine--glycine ligase (Methanopyrus kandleri (strain AV19 / DSM 6324 / JCM 9639 / NBRC 100938)).